Consider the following 160-residue polypeptide: uncharacterized protein (160 aa).

In terms of domain architecture, HTH marR-type spans 20 to 152 (EREIWVLYMK…VYEGLSILSR (133 aa)). A DNA-binding region (H-T-H motif) is located at residues 66 to 89 (VSDIAEKMGASLSNTTGLLDRLEK).

This is an uncharacterized protein from Bacillus subtilis (strain 168).